We begin with the raw amino-acid sequence, 67 residues long: Moricin (67 aa).

The N-terminal stretch at 1 to 23 (MKLTSLFIFVIVALSLLFSSTDA) is a signal peptide.

This sequence belongs to the moricin family. As to quaternary structure, monomer.

It is found in the secreted. In terms of biological role, antimicrobial peptide. Active against a broad spectrum of Gram-positive and Gram-negative bacteria including methicillin-resistant S.aureus ATCC 43 300, S.aureus BAA-39, pathogenic strains of L.monocytogenes, K.pneumoniae, E.coli O157:H7, S.typhimurium and multidrug-resistant S.typhimurium DT104 with minimum inhibitory concentration (MIC) of 1.4 uM for all except for S.aureus BAA-39. Also active against Serratia marcescens. Probably acts by disturbing membrane functions with its amphipathic alpha-helical structure. May protect a developing embryo from bacterial infection. The protein is Moricin of Manduca sexta (Tobacco hawkmoth).